The primary structure comprises 448 residues: Adenylyltransferase and sulfurtransferase UBA4 (448 aa).

ATP-binding positions include glycine 88, aspartate 109, 116 to 120 (SNLHR), lysine 133, and 177 to 178 (DT). Positions 219 and 222 each coordinate Zn(2+). Catalysis depends on cysteine 236, which acts as the Glycyl thioester intermediate; for adenylyltransferase activity. Zn(2+)-binding residues include cysteine 297 and cysteine 300. The 98-residue stretch at 349 to 446 (QGENSILIDV…WSKEIDSKIP (98 aa)) folds into the Rhodanese domain. Residue cysteine 405 is the Cysteine persulfide intermediate; for sulfurtransferase activity of the active site.

It in the N-terminal section; belongs to the HesA/MoeB/ThiF family. UBA4 subfamily. The cofactor is Zn(2+).

It is found in the cytoplasm. The protein resides in the cytosol. The protein operates within tRNA modification; 5-methoxycarbonylmethyl-2-thiouridine-tRNA biosynthesis. In terms of biological role, plays a central role in 2-thiolation of mcm(5)S(2)U at tRNA wobble positions of cytosolic tRNA(Lys), tRNA(Glu) and tRNA(Gln). Acts by mediating the C-terminal thiocarboxylation of sulfur carrier URM1. Its N-terminus first activates URM1 as acyl-adenylate (-COAMP), then the persulfide sulfur on the catalytic cysteine is transferred to URM1 to form thiocarboxylation (-COSH) of its C-terminus. The reaction probably involves hydrogen sulfide that is generated from the persulfide intermediate and that acts as a nucleophile towards URM1. Subsequently, a transient disulfide bond is formed. Does not use thiosulfate as sulfur donor; NFS1 probably acting as a sulfur donor for thiocarboxylation reactions. Prior mcm(5) tRNA modification by the elongator complex is required for 2-thiolation. May also be involved in protein urmylation. The polypeptide is Adenylyltransferase and sulfurtransferase UBA4 (Debaryomyces hansenii (strain ATCC 36239 / CBS 767 / BCRC 21394 / JCM 1990 / NBRC 0083 / IGC 2968) (Yeast)).